Reading from the N-terminus, the 46-residue chain is Apamin (46 aa).

The first 27 residues, 1–27 (MISMLRCIYLFLSVILITSYFVTPVMP), serve as a signal peptide directing secretion. 2 cysteine pairs are disulfide-bonded: C28–C38 and C30–C42. The essential for toxin activity stretch occupies residues 40 to 41 (RR). Position 45 is a histidine amide (H45).

In terms of tissue distribution, expressed by the venom gland.

The protein resides in the secreted. Its function is as follows. Toxin with unique selectivity to KCa2 channels. Potently blocks human, rat and mouse KCa2.2/KCNN2/SK2 channels (IC(50)=27-140 pM), and moderately blocks human and rat KCa2.3/KCNN3/SK3 channels (IC(50)=0.6-4 nM), and human (IC(50)=0.7-12 nM) and mouse (IC(50)=28 nM) KCa2.1/KCNN1/SK1 channels. Does not show any antimicrobial activity. In vivo, intracerebroventricular injection into rats of a dose of 1 ng results in neurodegeneration specifically in the Purkinje cells of the cerebellum, and induces seizures characterized by hypersensitivity to noise, loss of postural control, paroxystic jerking, and alternating periods of great agitation with tonic-clonic convulsions and periods of total prostration. When administered at high doses, exerts anti-inflammatory, anti-oxidative, anti-fibrotic and anti-apoptotic properties in several models of inflammatory disease, including gouty arthritis, atherosclerosis, atopic dermatitis and acute kidney injury. Down-regulates pro-inflammatory signaling pathways, such as the NF-kappaB and STAT3 pathways, probably by blocking SK channels such as KCa2.2/KCNN2/SK2 and/or KCa2.3/KCNN3/SK3 which are thought to be involved in promoting some inflammatory responses. For example in mouse and rat microglia cells, inhibits LPS-activated KCa2.2/KCNN2/SK2 channels and TLR4 expression leading to the down-regulation of the NF-kappaB, STAT, and MAPK/ERK signaling pathways and, as a consequence, decreases secretion of pro-inflammatory cytokines. The chain is Apamin from Apis mellifera (Honeybee).